A 469-amino-acid chain; its full sequence is Pup--protein ligase (469 aa).

Glutamate 9 contacts Mg(2+). An ATP-binding site is contributed by arginine 53. Residue tyrosine 55 coordinates Mg(2+). Aspartate 57 functions as the Proton acceptor in the catalytic mechanism. Glutamate 63 serves as a coordination point for Mg(2+). ATP contacts are provided by threonine 66 and tryptophan 430.

It belongs to the Pup ligase/Pup deamidase family. Pup-conjugating enzyme subfamily.

It catalyses the reaction ATP + [prokaryotic ubiquitin-like protein]-L-glutamate + [protein]-L-lysine = ADP + phosphate + N(6)-([prokaryotic ubiquitin-like protein]-gamma-L-glutamyl)-[protein]-L-lysine.. Its pathway is protein degradation; proteasomal Pup-dependent pathway. The protein operates within protein modification; protein pupylation. Functionally, catalyzes the covalent attachment of the prokaryotic ubiquitin-like protein modifier Pup to the proteasomal substrate proteins, thereby targeting them for proteasomal degradation. This tagging system is termed pupylation. The ligation reaction involves the side-chain carboxylate of the C-terminal glutamate of Pup and the side-chain amino group of a substrate lysine. This is Pup--protein ligase from Kocuria rhizophila (strain ATCC 9341 / DSM 348 / NBRC 103217 / DC2201).